The chain runs to 7354 residues: Microtubule-actin cross-linking factor 1, isoforms 1/2/3/4 (7354 aa).

The disordered stretch occupies residues 1 to 47; that stretch reads MSSSDEETLSERSCRSERSCRSERSYRSERSGSLSPCPPGDTLPWNL. The interval 1–295 is actin-binding; sequence MSSSDEETLS…VITYVSSIYD (295 aa). Residue Ser-4 is modified to Phosphoserine. Over residues 9–30 the composition is skewed to basic and acidic residues; it reads LSERSCRSERSCRSERSYRSER. The residue at position 35 (Ser-35) is a Phosphoserine. At Thr-42 the chain carries Phosphothreonine. Residue Ser-57 is modified to Phosphoserine. Calponin-homology (CH) domains follow at residues 78 to 181 and 194 to 298; these read RVQK…LHFQ and MSAK…DAFP. The stretch at 148–171 is one LRR 1 repeat; sequence QRQVKLVNIRNDDITDGNPKLTLG. Residue Ser-280 is modified to Phosphoserine. 2 LRR repeats span residues 377–399 and 441–464; these read LYKL…YHPN and LNCE…LESG. The region spanning 868-925 is the SH3 domain; that stretch reads KSTLSVKAICDYRQIEITICKNDECVLEDNSQRTKWKVISPTGNEAMVPSVCFLIPPP. The stretch at 1050-1073 is one LRR 5 repeat; the sequence is ISELKNIRLLLEECEQRLLKQIQS. Position 1122 is a phosphoserine (Ser-1122). LRR repeat units lie at residues 1128–1154, 1187–1210, and 1257–1282; these read ATTL…VYLN, PADL…VKDK, and HRVI…DYRA. Residues Ser-1367 and Ser-1376 each carry the phosphoserine modification. Plectin repeat units follow at residues 1577-1619, 1654-1696, 1769-1809, 1811-1848, and 1855-1885; these read LVLL…QLLG, LKVL…ELQS, RLLE…CAIL, RQLQ…VILE, and GLLL…HKIL. Residues Ser-2051, Ser-2077, and Ser-2081 each carry the phosphoserine modification. Composition is skewed to basic and acidic residues over residues 2120-2131 and 2145-2155; these read KEEQAETLREEN and SEGKDLSTEKS. The segment at 2120 to 2155 is disordered; sequence KEEQAETLREENISGDPLLVECPEESEGKDLSTEKS. 5 Plectin repeats span residues 2276–2316, 2352–2393, 2394–2425, 2487–2528, and 2671–2715; these read STLS…VKLM, NVLM…RILE, GQVI…DTAD, LLTK…LRKV, and LKVL…ASHQ. 3 disordered regions span residues 2806 to 2841, 2951 to 2978, and 3058 to 3099; these read AGIR…DSKV, EMGG…EVTI, and SQET…HISK. The span at 2812 to 2837 shows a compositional bias: basic and acidic residues; it reads NGEKAEKGRKISVEMEGQRQDEKASS. A compositionally biased stretch (acidic residues) spans 2968–2978; it reads SEEESDQEVTI. Residues Ser-3082 and Ser-3085 each carry the phosphoserine modification. 3 LRR repeats span residues 3225–3244, 3606–3630, and 3657–3681; these read VGQR…LPTR, SGKS…IQSH, and LTAL…TRVA. 2 Spectrin repeats span residues 3845 to 3920 and 3962 to 4070; these read ELQK…NFEE and QYQQ…ALLQ. Ser-3889 is modified (phosphoserine). Residues 3898–3920 form an LRR 12 repeat; the sequence is KGDLRFVTISGQKVLETENNFEE. 2 LRR repeats span residues 4087-4112 and 4223-4249; these read LQSI…VIQE and IQEL…TLGS. Residues 4428–4536 form a Spectrin 3 repeat; that stretch reads RMEEVQKEAS…TVARQKQLEE (109 aa). Ser-4458 and Ser-4483 each carry phosphoserine. LRR repeat units lie at residues 4473 to 4496, 4563 to 4583, and 4728 to 4751; these read KAFL…LAGL, GVLG…QFML, and KKRL…RMNR. A Spectrin 4 repeat occupies 4759–4863; the sequence is TQQFQQMFDE…KTANRQSRLK (105 aa). At Ser-4921 the chain carries Phosphoserine. LRR repeat units follow at residues 5010-5035, 5131-5153, and 5240-5263; these read NKNL…YLRN, NKIQ…MLEE, and KDQV…LIQS. Spectrin repeat units follow at residues 5195 to 5300, 5307 to 5409, 5414 to 5506, 5631 to 5735, 5742 to 5844, 5961 to 6066, 6071 to 6175, 6181 to 6284, 6289 to 6395, 6400 to 6503, 6508 to 6614, 6621 to 6722, and 6726 to 6830; these read EDFY…QLQE, KFQD…QLED, AKQF…ADIT, RSQQ…ARLE, NQFW…ALDE, LAEK…KLED, AVQY…HKLE, LGQF…QQLQ, QAQG…KLEE, ATEF…RSLD, RAKQ…KLEE, QFMD…RLEQ, and QAEE…QRLE. A Phosphothreonine modification is found at Thr-5394. 2 LRR repeats span residues 5654 to 5678 and 5763 to 5787; these read MALG…AFSI and AQLP…QLRE. Ser-5988 is modified (phosphoserine). Lys-6166 is subject to N6-acetyllysine. One copy of the LRR 23 repeat lies at 6452–6475; the sequence is RDQIIELDQTGNQLKFLSQKQDVV. Residues 6904-6937 form a disordered region; the sequence is SVEPTHAPFMEKSRSGSRKSLNQPTPPPMPILSQ. At Ser-6923 the chain carries Phosphoserine. EF-hand domains are found at residues 7001–7036 and 7037–7072; these read HKKS…SKFP and TTKL…NKDA. The Ca(2+) site is built by Asp-7014, Asp-7016, Asp-7018, Lys-7020, Glu-7025, Asp-7050, Asp-7052, Asp-7054, Tyr-7056, and Glu-7061. The GAR domain occupies 7077-7155; that stretch reads TDADKIEDEV…EFLVKNDPCR (79 aa). Residues 7077–7354 are C-terminal tail; that stretch reads TDADKIEDEV…ASPRTPGPKR (278 aa). Positions 7171–7354 are disordered; sequence PEGASQGMTP…ASPRTPGPKR (184 aa). Residues 7191-7225 are compositionally biased toward low complexity; that stretch reads SSRAASPTRSSSSASQSNHSCTSMPSSPATPASGT. At Thr-7220 the chain carries Phosphothreonine. Residues 7242-7261 show a composition bias toward polar residues; that stretch reads FHSSRTSLAGDTSNSSSPAS. Phosphoserine is present on residues Ser-7245 and Ser-7258. Low complexity predominate over residues 7276-7290; sequence SRPGSRAGSRAGSRA. Residues 7279-7294 form a 4 X 4 AA tandem repeats of [GS]-S-R-[AR] region; sequence GSRAGSRAGSRASSRR. Ser-7296 and Ser-7299 each carry phosphoserine. The segment covering 7305 to 7315 has biased composition (polar residues); it reads ETQSACSDTSE. The segment covering 7316–7327 has biased composition (low complexity); it reads SSAAGGQGSSRR.

The protein belongs to the plakin or cytolinker family. In terms of assembly, interacts with AXIN1, LRP6 and GOLGA4. Found in a complex composed of MACF1, APC, AXIN1, CTNNB1 and GSK3B. Interacts with MAPRE1, CLASP1 and CLASP2. Interacts with CAMSAP3. In terms of processing, phosphorylated on serine residues in the C-terminal tail by GSK3B. Phosphorylation inhibits microtubule-binding and this plays a critical role in bulge stem cell migration and skin wound repair. Wnt-signaling can repress phosphorylation. Enriched in the hair follicle stem cells (at protein level). Isoform 1 and isoform 2 are ubiquitous expressed, with higher levels seen in lung, heart, thymus, spleen and brain.

It localises to the cytoplasm. The protein localises to the cytoskeleton. Its subcellular location is the golgi apparatus. It is found in the cell membrane. The protein resides in the cell projection. It localises to the ruffle membrane. Its function is as follows. F-actin-binding protein which plays a role in cross-linking actin to other cytoskeletal proteins and also binds to microtubules. Plays an important role in ERBB2-dependent stabilization of microtubules at the cell cortex. Acts as a positive regulator of Wnt receptor signaling pathway and is involved in the translocation of AXIN1 and its associated complex (composed of APC, CTNNB1 and GSK3B) from the cytoplasm to the cell membrane. Has actin-regulated ATPase activity and is essential for controlling focal adhesions (FAs) assembly and dynamics. Interaction with CAMSAP3 at the minus ends of non-centrosomal microtubules tethers microtubules minus-ends to actin filaments, regulating focal adhesion size and cell migration. May play role in delivery of transport vesicles containing GPI-linked proteins from the trans-Golgi network through its interaction with GOLGA4. Plays a key role in wound healing and epidermal cell migration. Required for efficient upward migration of bulge cells in response to wounding and this function is primarily rooted in its ability to coordinate microtubule dynamics and polarize hair follicle stem cells. As a regulator of actin and microtubule arrangement and stabilization, it plays an essential role in neurite outgrowth, branching and spine formation during brain development. The sequence is that of Microtubule-actin cross-linking factor 1, isoforms 1/2/3/4 from Mus musculus (Mouse).